A 688-amino-acid chain; its full sequence is DNA ligase (688 aa).

NAD(+) is bound by residues 42-46, 91-92, and E128; these read DAEYD and SL. The active-site N6-AMP-lysine intermediate is K130. Residues R151, E188, K305, and K329 each coordinate NAD(+). C423, C426, C441, and C447 together coordinate Zn(2+). Residues 608-688 form the BRCT domain; it reads APQGVLAGKT…GMRKLLEGQL (81 aa).

This sequence belongs to the NAD-dependent DNA ligase family. LigA subfamily. It depends on Mg(2+) as a cofactor. Mn(2+) is required as a cofactor.

The enzyme catalyses NAD(+) + (deoxyribonucleotide)n-3'-hydroxyl + 5'-phospho-(deoxyribonucleotide)m = (deoxyribonucleotide)n+m + AMP + beta-nicotinamide D-nucleotide.. In terms of biological role, DNA ligase that catalyzes the formation of phosphodiester linkages between 5'-phosphoryl and 3'-hydroxyl groups in double-stranded DNA using NAD as a coenzyme and as the energy source for the reaction. It is essential for DNA replication and repair of damaged DNA. The chain is DNA ligase from Paraburkholderia xenovorans (strain LB400).